The primary structure comprises 307 residues: GTPase Era (307 aa).

The Era-type G domain maps to 7-181 (RCGWVALLGP…VKLVKSKLPV (175 aa)). Residues 15–22 (GPPNAGKS) are G1. 15–22 (GPPNAGKS) is a GTP binding site. The tract at residues 41-45 (QTTRN) is G2. Residues 62–65 (DTPG) form a G3 region. GTP contacts are provided by residues 62 to 66 (DTPGI) and 130 to 133 (NKVD). The interval 130–133 (NKVD) is G4. The segment at 160-162 (VSA) is G5. The 79-residue stretch at 212–290 (LRQELPYSVA…HLELWVKVRE (79 aa)) folds into the KH type-2 domain.

Belongs to the TRAFAC class TrmE-Era-EngA-EngB-Septin-like GTPase superfamily. Era GTPase family. In terms of assembly, monomer.

It is found in the cytoplasm. Its subcellular location is the cell inner membrane. Functionally, an essential GTPase that binds both GDP and GTP, with rapid nucleotide exchange. Plays a role in 16S rRNA processing and 30S ribosomal subunit biogenesis and possibly also in cell cycle regulation and energy metabolism. The chain is GTPase Era from Nitratidesulfovibrio vulgaris (strain DSM 19637 / Miyazaki F) (Desulfovibrio vulgaris).